We begin with the raw amino-acid sequence, 113 residues long: T cell receptor alpha variable 13-2 (113 aa).

An N-terminal signal peptide occupies residues 1–21; it reads MAGIRALFMYLWLQLDWVSRG. The Ig-like domain occupies 22-113; sequence ESVGLHLPTL…DSAVYFCAEN (92 aa). A disulfide bond links C43 and C110. N-linked (GlcNAc...) asparagine glycosylation is present at N87.

As to quaternary structure, alpha-beta TR is a heterodimer composed of an alpha and beta chain; disulfide-linked. The alpha-beta TR is associated with the transmembrane signaling CD3 coreceptor proteins to form the TR-CD3 (TcR or TCR). The assembly of alpha-beta TR heterodimers with CD3 occurs in the endoplasmic reticulum where a single alpha-beta TR heterodimer associates with one CD3D-CD3E heterodimer, one CD3G-CD3E heterodimer and one CD247 homodimer forming a stable octameric structure. CD3D-CD3E and CD3G-CD3E heterodimers preferentially associate with TR alpha and TR beta chains, respectively. The association of the CD247 homodimer is the last step of TcR assembly in the endoplasmic reticulum and is required for transport to the cell surface.

Its subcellular location is the cell membrane. Functionally, v region of the variable domain of T cell receptor (TR) alpha chain that participates in the antigen recognition. Alpha-beta T cell receptors are antigen specific receptors which are essential to the immune response and are present on the cell surface of T lymphocytes. Recognize peptide-major histocompatibility (MH) (pMH) complexes that are displayed by antigen presenting cells (APC), a prerequisite for efficient T cell adaptive immunity against pathogens. Binding of alpha-beta TR to pMH complex initiates TR-CD3 clustering on the cell surface and intracellular activation of LCK that phosphorylates the ITAM motifs of CD3G, CD3D, CD3E and CD247 enabling the recruitment of ZAP70. In turn ZAP70 phosphorylates LAT, which recruits numerous signaling molecules to form the LAT signalosome. The LAT signalosome propagates signal branching to three major signaling pathways, the calcium, the mitogen-activated protein kinase (MAPK) kinase and the nuclear factor NF-kappa-B (NF-kB) pathways, leading to the mobilization of transcription factors that are critical for gene expression and essential for T cell growth and differentiation. The T cell repertoire is generated in the thymus, by V-(D)-J rearrangement. This repertoire is then shaped by intrathymic selection events to generate a peripheral T cell pool of self-MH restricted, non-autoaggressive T cells. Post-thymic interaction of alpha-beta TR with the pMH complexes shapes TR structural and functional avidity. The chain is T cell receptor alpha variable 13-2 from Homo sapiens (Human).